A 268-amino-acid polypeptide reads, in one-letter code: Membrane lipoprotein TpN32 (268 aa).

The first 23 residues, Met-1–Ala-23, serve as a signal peptide directing secretion. Cys-24 carries the N-palmitoyl cysteine lipid modification. Cys-24 carries the S-diacylglycerol cysteine lipid modification.

The protein belongs to the NlpA lipoprotein family.

The protein resides in the cell membrane. The polypeptide is Membrane lipoprotein TpN32 (tpn32) (Treponema pallidum (strain Nichols)).